Reading from the N-terminus, the 151-residue chain is Probable cGMP 3',5'-cyclic phosphodiesterase subunit delta (151 aa).

This sequence belongs to the PDE6D/unc-119 family. As to quaternary structure, interacts with Pde6.

It is found in the nucleus. The protein localises to the cytoplasm. The chain is Probable cGMP 3',5'-cyclic phosphodiesterase subunit delta from Drosophila erecta (Fruit fly).